Reading from the N-terminus, the 35-residue chain is MEALVYTFLLVSTLGIIFFAIFFREPPKIQTKKIK.

Residues 3-23 traverse the membrane as a helical segment; the sequence is ALVYTFLLVSTLGIIFFAIFF.

This sequence belongs to the PsbT family. As to quaternary structure, PSII is composed of 1 copy each of membrane proteins PsbA, PsbB, PsbC, PsbD, PsbE, PsbF, PsbH, PsbI, PsbJ, PsbK, PsbL, PsbM, PsbT, PsbY, PsbZ, Psb30/Ycf12, at least 3 peripheral proteins of the oxygen-evolving complex and a large number of cofactors. It forms dimeric complexes.

The protein resides in the plastid. Its subcellular location is the chloroplast thylakoid membrane. In terms of biological role, found at the monomer-monomer interface of the photosystem II (PS II) dimer, plays a role in assembly and dimerization of PSII. PSII is a light-driven water plastoquinone oxidoreductase, using light energy to abstract electrons from H(2)O, generating a proton gradient subsequently used for ATP formation. The polypeptide is Photosystem II reaction center protein T (Bassia hyssopifolia (Fivehorn smotherweed)).